Here is a 409-residue protein sequence, read N- to C-terminus: O-methyltransferase pyiA (409 aa).

The span at 1–21 (MASQDGTTELLSQSVNSTCIP) shows a compositional bias: polar residues. The tract at residues 1 to 46 (MASQDGTTELLSQSVNSTCIPGSTYHVDRGRASSASTPPTSPPLSE) is disordered. Position 271 (Asp271) interacts with S-adenosyl-L-methionine. The Proton acceptor role is filled by His317.

This sequence belongs to the class I-like SAM-binding methyltransferase superfamily. Cation-independent O-methyltransferase family.

It functions in the pathway mycotoxin biosynthesis. Its function is as follows. O-methyltransferase; part of the gene cluster that mediates the biosynthesis of the mycotoxin pyrichalasin H, a tyrosine-derived cytochalasan that inhibits the growth of rice seedlings, but also inhibits lymphocyte capping and actin polymerization and alters cell morphology. Pyrichalasin H is indicated as the responsible agent for the genus-specific pathogenicity of M.grisea toward crabgrass. The first step in the pathway is catalyzed by the O-methyltransferase pyiA which methylates free tyrosine to generate the precursor O-methyltyrosine. The hybrid PKS-NRPS pyiS, assisted by the enoyl reductase pyiC, are responsible for fusion of the O-methyltyrosine precursor and the polyketide backbone. The polyketide synthase module (PKS) of pyiS is responsible for the synthesis of the polyketide backbone and the downstream nonribosomal peptide synthetase (NRPS) amidates the carboxyl end of the polyketide with the O-methyltyrosine precursor. As the NRPS A-domain demonstrates substrate tolerance, pyiS can also use phenylalanine, tyrosine and even para-chlorophenylalanine as amino acid precursor, which leads to the production of novel cytochalasans, including halogenated cytochalasans. Because pyiS lacks a designated enoylreductase (ER) domain, the required activity is provided the enoyl reductase pyiC. Reduction by the hydrolyase pyiE leads to 1,5-dihydropyrrolone, which is substrate for dehydration and intra-molecular Diels-Alder cyclization by the Diels-Alderase pyiF to yield the required isoindolone-fused macrocycle. The tailoring cytochrome P450 monooxygenases piyD and piyG catalyze the hydroxylation at C-18 and C-7, respectivily, whereas the short-chain dehydrogenase/reductase pyiH reduces the carbonyl at C-21 in preparation for the transfer of an acetyl group by the acetyltransferase pyiB. These 3 reactions whose order is not clear yet, lead to the production of O-methylpyrichalasin J, a deacetylated pyrichalasin H. Finally, pyiB to converts O-methylpyrichalasin J into the final product pyrichalasin H via acetylation of C-21. This chain is O-methyltransferase pyiA, found in Pyricularia grisea (Crabgrass-specific blast fungus).